The sequence spans 663 residues: Probable peptidyl-glycine alpha-amidating monooxygenase pamn-1 (663 aa).

The N-terminal stretch at methionine 1–alanine 21 is a signal peptide. Positions methionine 1–proline 300 are peptidylglycine alpha-hydroxylating monooxygenase. Cu(2+)-binding residues include histidine 75 and histidine 76. An intrachain disulfide couples cysteine 82 to cysteine 98. Position 142 (histidine 142) interacts with Cu(2+). Asparagine 191 carries an N-linked (GlcNAc...) asparagine glycan. Cystine bridges form between cysteine 194/cysteine 305 and cysteine 261/cysteine 283. Positions 210 and 212 each coordinate Cu(2+). N-linked (GlcNAc...) asparagine glycosylation is present at asparagine 269. Methionine 282 contributes to the Cu(2+) binding site. Positions glutamine 301–asparagine 663 are peptidyl-alpha-hydroxyglycine alpha-amidating lyase. Residue arginine 376 participates in a protein binding. The N-linked (GlcNAc...) asparagine glycan is linked to asparagine 411. 4 NHL repeats span residues asparagine 411 to glutamate 454, serine 464 to asparagine 507, isoleucine 511 to glutamine 554, and phenylalanine 626 to phenylalanine 656. A disulfide bridge connects residues cysteine 478 and cysteine 497. A protein contacts are provided by tyrosine 496 and arginine 543.

The protein in the C-terminal section; belongs to the peptidyl-alpha-hydroxyglycine alpha-amidating lyase family. In the N-terminal section; belongs to the copper type II ascorbate-dependent monooxygenase family. As to quaternary structure, monomer. Zn(2+) serves as cofactor. Cu(2+) is required as a cofactor.

The protein resides in the secreted. It carries out the reaction a [peptide]-C-terminal glycine + 2 L-ascorbate + O2 = a [peptide]-C-terminal (2S)-2-hydroxyglycine + 2 monodehydro-L-ascorbate radical + H2O. The enzyme catalyses a [peptide]-C-terminal (2S)-2-hydroxyglycine = a [peptide]-C-terminal amide + glyoxylate. Its function is as follows. Probable bifunctional enzyme that catalyzes 2 sequential steps in C-terminal alpha-amidation of peptides. The monooxygenase part produces an unstable peptidyl(2-hydroxyglycine) intermediate that is dismutated to glyoxylate and the corresponding desglycine peptide amide by the lyase part. C-terminal amidation of peptides such as neuropeptides is essential for full biological activity. The chain is Probable peptidyl-glycine alpha-amidating monooxygenase pamn-1 from Caenorhabditis elegans.